The primary structure comprises 388 residues: Chorismate synthase (388 aa).

NADP(+) contacts are provided by Arg-39 and Arg-45. Positions 95–118 are disordered; it reads EKNEKSRRVSRPRPGHADLVGGMK. FMN-binding positions include 130 to 132, 251 to 252, Gly-296, 311 to 315, and Arg-337; these read RSS, NA, and KPIPT.

This sequence belongs to the chorismate synthase family. In terms of assembly, homotetramer. The cofactor is FMNH2.

It catalyses the reaction 5-O-(1-carboxyvinyl)-3-phosphoshikimate = chorismate + phosphate. It functions in the pathway metabolic intermediate biosynthesis; chorismate biosynthesis; chorismate from D-erythrose 4-phosphate and phosphoenolpyruvate: step 7/7. Its function is as follows. Catalyzes the anti-1,4-elimination of the C-3 phosphate and the C-6 proR hydrogen from 5-enolpyruvylshikimate-3-phosphate (EPSP) to yield chorismate, which is the branch point compound that serves as the starting substrate for the three terminal pathways of aromatic amino acid biosynthesis. This reaction introduces a second double bond into the aromatic ring system. The sequence is that of Chorismate synthase from Listeria monocytogenes serotype 4b (strain CLIP80459).